A 778-amino-acid chain; its full sequence is Protein SPT2 homolog (778 aa).

3 disordered regions span residues 1–21 (MDFHSVLKMAAAKPGSDGIAK), 50–625 (KKDE…AKPK), and 639–685 (VPKS…DDDD). Positions 1–665 (MDFHSVLKMA…PGHRPAMRPP (665 aa)) are important for interaction with DNA. A coiled-coil region spans residues 44–83 (VQAFLRKKDEESRRKETVEKRKKEDLLAKRKELKHDRKAR). Over residues 50–78 (KKDEESRRKETVEKRKKEDLLAKRKELKH) the composition is skewed to basic and acidic residues. Acidic residues predominate over residues 114 to 135 (EEDQNDNMAAEGEEYMTEEELY). The span at 153 to 167 (QKVPKPAPGKKPPTP) shows a compositional bias: pro residues. Basic and acidic residues predominate over residues 190-227 (RPVKKEERLRTAEELKELEFLERKAQKADRKDPKRNEQ). Residues 193–221 (KKEERLRTAEELKELEFLERKAQKADRKD) are a coiled coil. Residues 242–269 (LKGTHSGNSKSSSTEQNGTIRKSSSDTG) are compositionally biased toward polar residues. The segment covering 270-286 (SRTEKSGSVFHTKESKK) has biased composition (basic and acidic residues). Positions 312 to 335 (SSQPSAASNSAFGRPSGSARPSGS) are enriched in low complexity. 2 stretches are compositionally biased toward gly residues: residues 336–357 (SGPGRPLGGSGSSSGKSTGGSA) and 365–384 (GGSGSGSGKPMGGSGSGKPI). The segment covering 385–394 (GGLHSSHGSG) has biased composition (low complexity). Gly residues predominate over residues 395-417 (KPTGGTGSGSGKPTGASGSGSGK). 2 stretches are compositionally biased toward low complexity: residues 418 to 493 (PTGS…SGSA) and 506 to 559 (GSGS…PSSS). The span at 588–604 (VRPNSTSVPGSARSSLG) shows a compositional bias: polar residues. Over residues 662–671 (MRPPGPPLPP) the composition is skewed to pro residues. An important for interaction with histones region spans residues 666 to 778 (GPPLPPITSS…QLKAAKKMSR (113 aa)). Positions 735–778 (REQQKEEARSLRLGIQEDLEELQREEEELKRKAKQLKAAKKMSR) form a coiled coil.

This sequence belongs to the SPT2 family. Interacts with histones. Interacts with a heterotetrameric complex formed by histone H3 and H4, especially when the histone tetramer is not bound to DNA.

Its subcellular location is the nucleus. The protein localises to the nucleolus. Histone chaperone that stabilizes pre-existing histone tetramers and regulates replication-independent histone exchange on chromatin. Required for normal chromatin refolding in the coding region of transcribed genes, and for the suppression of spurious transcription. Binds DNA and histones and promotes nucleosome assembly (in vitro). Facilitates formation of tetrameric histone complexes containing histone H3 and H4. Modulates RNA polymerase 1-mediated transcription. Binds DNA, with a preference for branched DNA species, such as Y-form DNA and Holliday junction DNA. This chain is Protein SPT2 homolog (spty2d1), found in Xenopus tropicalis (Western clawed frog).